The sequence spans 69 residues: Metallothionein-like protein 3 (69 aa).

The protein belongs to the metallothionein superfamily. Type 15 family. In terms of tissue distribution, expressed in leaf mesophyll cells, root tips, and at low levels in anthers.

Metallothioneins have a high content of cysteine residues that bind various heavy metals. Functions as a metal chelator of copper (Cu) and zinc (Zn). Plays a role in Cu homeostasis, specifically in the remobilization of Cu from senescing leaves. The mobilization of Cu from internal sources is important for seed development. The sequence is that of Metallothionein-like protein 3 from Arabidopsis thaliana (Mouse-ear cress).